Here is a 458-residue protein sequence, read N- to C-terminus: Serine--tRNA ligase (458 aa).

Thr255–Glu257 provides a ligand contact to L-serine. Residues Arg286–Glu288 and Val302 contribute to the ATP site. Residue Glu309 participates in L-serine binding. Residue Glu373–Ser376 participates in ATP binding. Thr409 lines the L-serine pocket.

This sequence belongs to the class-II aminoacyl-tRNA synthetase family. Type-1 seryl-tRNA synthetase subfamily. In terms of assembly, homodimer. The tRNA molecule binds across the dimer.

The protein localises to the cytoplasm. It catalyses the reaction tRNA(Ser) + L-serine + ATP = L-seryl-tRNA(Ser) + AMP + diphosphate + H(+). The enzyme catalyses tRNA(Sec) + L-serine + ATP = L-seryl-tRNA(Sec) + AMP + diphosphate + H(+). It participates in aminoacyl-tRNA biosynthesis; selenocysteinyl-tRNA(Sec) biosynthesis; L-seryl-tRNA(Sec) from L-serine and tRNA(Sec): step 1/1. Functionally, catalyzes the attachment of serine to tRNA(Ser). Is also able to aminoacylate tRNA(Sec) with serine, to form the misacylated tRNA L-seryl-tRNA(Sec), which will be further converted into selenocysteinyl-tRNA(Sec). The protein is Serine--tRNA ligase of Ignicoccus hospitalis (strain KIN4/I / DSM 18386 / JCM 14125).